We begin with the raw amino-acid sequence, 455 residues long: Mycosin-4 (455 aa).

Residues methionine 1–valine 25 form the signal peptide. A Peptidase S8 domain is found at serine 74–valine 384. Active-site charge relay system residues include aspartate 98, histidine 129, and serine 329. A disordered region spans residues isoleucine 389 to arginine 417. The segment covering threonine 394–proline 412 has biased composition (low complexity). Residues leucine 432–isoleucine 452 form a helical membrane-spanning segment.

It belongs to the peptidase S8 family.

The protein localises to the cell membrane. This is Mycosin-4 from Mycobacterium tuberculosis (strain ATCC 25618 / H37Rv).